The primary structure comprises 93 residues: Large ribosomal subunit protein eL29 (93 aa).

The segment covering 1 to 31 has biased composition (basic residues); that stretch reads MAKSKNHSTHHKNRKDHRNGIKKAVVHKKTS. The segment at 1 to 33 is disordered; that stretch reads MAKSKNHSTHHKNRKDHRNGIKKAVVHKKTSSK.

The protein belongs to the eukaryotic ribosomal protein eL29 family.

This chain is Large ribosomal subunit protein eL29 (rpl29), found in Dictyostelium discoideum (Social amoeba).